The following is a 261-amino-acid chain: tRNA pseudouridine synthase A (261 aa).

The active-site Nucleophile is the D53. Y111 provides a ligand contact to substrate.

Belongs to the tRNA pseudouridine synthase TruA family. As to quaternary structure, homodimer.

The catalysed reaction is uridine(38/39/40) in tRNA = pseudouridine(38/39/40) in tRNA. Its function is as follows. Formation of pseudouridine at positions 38, 39 and 40 in the anticodon stem and loop of transfer RNAs. This chain is tRNA pseudouridine synthase A, found in Shouchella clausii (strain KSM-K16) (Alkalihalobacillus clausii).